Here is a 426-residue protein sequence, read N- to C-terminus: Enolase 1 (426 aa).

Glutamine 163 contributes to the (2R)-2-phosphoglycerate binding site. Glutamate 205 serves as the catalytic Proton donor. The Mg(2+) site is built by aspartate 242, glutamate 283, and aspartate 310. Residues lysine 335, arginine 364, serine 365, and lysine 386 each coordinate (2R)-2-phosphoglycerate. Lysine 335 (proton acceptor) is an active-site residue.

Belongs to the enolase family. Requires Mg(2+) as cofactor.

It is found in the cytoplasm. It localises to the secreted. The protein localises to the cell surface. The enzyme catalyses (2R)-2-phosphoglycerate = phosphoenolpyruvate + H2O. It participates in carbohydrate degradation; glycolysis; pyruvate from D-glyceraldehyde 3-phosphate: step 4/5. Its function is as follows. Catalyzes the reversible conversion of 2-phosphoglycerate (2-PG) into phosphoenolpyruvate (PEP). It is essential for the degradation of carbohydrates via glycolysis. This is Enolase 1 from Streptomyces coelicolor (strain ATCC BAA-471 / A3(2) / M145).